The primary structure comprises 393 residues: Putative 8-amino-7-oxononanoate synthase (393 aa).

R23 is a substrate binding site. 110-111 lines the pyridoxal 5'-phosphate pocket; the sequence is GY. H135 contributes to the substrate binding site. Pyridoxal 5'-phosphate-binding positions include S183, 208–211, and 239–242; these read DEAH and TLSK. K242 is subject to N6-(pyridoxal phosphate)lysine. T362 contacts substrate.

This sequence belongs to the class-II pyridoxal-phosphate-dependent aminotransferase family. BioF subfamily. Homodimer. It depends on pyridoxal 5'-phosphate as a cofactor.

The catalysed reaction is 6-carboxyhexanoyl-[ACP] + L-alanine + H(+) = (8S)-8-amino-7-oxononanoate + holo-[ACP] + CO2. It participates in cofactor biosynthesis; biotin biosynthesis. Functionally, catalyzes the decarboxylative condensation of pimeloyl-[acyl-carrier protein] and L-alanine to produce 8-amino-7-oxononanoate (AON), [acyl-carrier protein], and carbon dioxide. The chain is Putative 8-amino-7-oxononanoate synthase (bioF) from Trichodesmium erythraeum (strain IMS101).